We begin with the raw amino-acid sequence, 115 residues long: Allergen Tha p 2 (115 aa).

The signal sequence occupies residues 1-15; it reads MKLLIFAILIALSSS.

The polypeptide is Allergen Tha p 2 (Thaumetopoea pityocampa (Pine processionary moth)).